The following is a 429-amino-acid chain: MVSHPCTADEAKPPSEGQLARFENGKLIVPDNLIVAYFKGDGIGPEIVESAKKVLDAAVDKAYGGTRRIVWWEVTAGEEAQKECGSLLPDGTLQAFKLARVNLKGPLTTPVGGGFRSLNVTLRMVLDLYSNVRPVKWYGQPTPHCHPENIDWVIFRENTEDVYAGIEWPFDSPEAQKIRDFLKKEFGIELTPDTGIGIKPISKWRTQRHVRRAMEWAIRNGYKHVTIMHKGNIMKYTEGAFRQWAYDLILSEFRDYVVTEEEVNTKYGGKAPEGKIIVNDRIADNMLQQIITRPGEYNVIVTPNLNGDYISDEANALVGGIGMAAGLDMGDGIAVAEPVHGSAPKYAGKNVINPTAEILSGMYLLSDFVGWPEVKLLVEYAVKQAIAHKQVTYDLAREMGGVTPISTTEYTDVLVDYIRHADLKALKGQ.

NADP(+) is bound at residue Thr-108. The D-threo-isocitrate site is built by Ser-117, Asn-119, Arg-123, Arg-133, and Arg-156. Asp-308 is a binding site for Mg(2+). NADP(+) is bound by residues 340–346, Asn-353, Tyr-393, and Arg-397; that span reads HGSAPKY.

It belongs to the isocitrate and isopropylmalate dehydrogenases family. In terms of assembly, homodimer. Mg(2+) serves as cofactor. Mn(2+) is required as a cofactor.

The catalysed reaction is D-threo-isocitrate + NADP(+) = 2-oxoglutarate + CO2 + NADPH. In terms of biological role, catalyzes the oxidative decarboxylation of isocitrate to 2-oxoglutarate and carbon dioxide with the concomitant reduction of NADP(+). This Caldococcus noboribetus protein is Isocitrate dehydrogenase [NADP] (icd).